Here is a 343-residue protein sequence, read N- to C-terminus: Methionine import ATP-binding protein MetN 1 (343 aa).

The 240-residue stretch at 2-241 (IKLSNITKVF…PKTPLAQKFI (240 aa)) folds into the ABC transporter domain. Position 38-45 (38-45 (GASGAGKS)) interacts with ATP.

Belongs to the ABC transporter superfamily. Methionine importer (TC 3.A.1.24) family. As to quaternary structure, the complex is composed of two ATP-binding proteins (MetN), two transmembrane proteins (MetI) and a solute-binding protein (MetQ).

It localises to the cell inner membrane. The catalysed reaction is L-methionine(out) + ATP + H2O = L-methionine(in) + ADP + phosphate + H(+). It carries out the reaction D-methionine(out) + ATP + H2O = D-methionine(in) + ADP + phosphate + H(+). In terms of biological role, part of the ABC transporter complex MetNIQ involved in methionine import. Responsible for energy coupling to the transport system. This chain is Methionine import ATP-binding protein MetN 1, found in Salmonella typhimurium (strain LT2 / SGSC1412 / ATCC 700720).